The primary structure comprises 207 residues: Ribosomal RNA large subunit methyltransferase E (207 aa).

S-adenosyl-L-methionine-binding residues include G49, W51, D69, D87, and D111. K151 serves as the catalytic Proton acceptor.

The protein belongs to the class I-like SAM-binding methyltransferase superfamily. RNA methyltransferase RlmE family.

The protein resides in the cytoplasm. The catalysed reaction is uridine(2552) in 23S rRNA + S-adenosyl-L-methionine = 2'-O-methyluridine(2552) in 23S rRNA + S-adenosyl-L-homocysteine + H(+). In terms of biological role, specifically methylates the uridine in position 2552 of 23S rRNA at the 2'-O position of the ribose in the fully assembled 50S ribosomal subunit. In Oleidesulfovibrio alaskensis (strain ATCC BAA-1058 / DSM 17464 / G20) (Desulfovibrio alaskensis), this protein is Ribosomal RNA large subunit methyltransferase E.